We begin with the raw amino-acid sequence, 584 residues long: MDGAPVDHHAQSGTEHAEQRLAEARELLRQSQAEAERLRHQLQSAQRHAAGLSERRRAAEAQTQTAARNNRRMVELLEATRAEIATLKENLDAVTHPPFTFATLEAVHAPREPEEGVETGAVVRGGADVVQNGRRLRVTVSPLLDAARLTPGAQVLLDESSSIVGVAPGTGSGQLLRVKEALPDGGLVLAGTADEERVVRRAPALEGVELRHGDAVTVDARVEWALRRVELSEVDEVLLEEVPDVTFEDIGGLGPQIDRIREAVEIPFLHPEVYREHGLRAPKGIMLYGPPGTGKTMLAKAVANALSARSADGERSFFLNVKGPELLNKYVGETERQIRVIFDRAREKADAGFPVVIFFDEMESLFRTRGSGVSSDVETTIVPQLLTEIDGVEALENVIVIGASNREDMIDPAVLRPGRLDVKIRVDRPDAAGAAEIMAKHLTADVPLHADDVAAAGSADAARGTLIARTVAALYDRGAGTALAELTDVSGTTHALHLADLVSGAVVADVVDRAKRHAVRDYLAAGQAPAALGVREGHLREAVAAVLEDQTDLLATVAPAEWARTSGWRGPRLRSLRMVRGVEA.

Positions 10-96 (AQSGTEHAEQ…LKENLDAVTH (87 aa)) form a coiled coil. The disordered stretch occupies residues 40 to 66 (HQLQSAQRHAAGLSERRRAAEAQTQTA). 292–297 (GTGKTM) contributes to the ATP binding site.

Belongs to the AAA ATPase family. In terms of assembly, homohexamer. Assembles into a hexameric ring structure.

The protein is AAA ATPase forming ring-shaped complexes of Micrococcus luteus (strain ATCC 4698 / DSM 20030 / JCM 1464 / CCM 169 / CCUG 5858 / IAM 1056 / NBRC 3333 / NCIMB 9278 / NCTC 2665 / VKM Ac-2230) (Micrococcus lysodeikticus).